Here is an 831-residue protein sequence, read N- to C-terminus: Zinc phosphodiesterase ELAC protein 2 (831 aa).

The N-terminal 16 residues, 1–16 (MWALRSLLRPLGLRTM), are a transit peptide targeting the mitochondrion. Disordered regions lie at residues 15–47 (TMSQ…PGGP) and 179–227 (SERR…ANRK). Positions 186-212 (QQPSQSPRTSPNRLSPKQSSDSGSAEN) are enriched in polar residues. Serine 191, serine 195, serine 200, serine 204, and serine 732 each carry phosphoserine. The interval 791 to 831 (LTQQADSPEDREPQQKRAHTDEPHSPQSKKESVANTLGARV) is disordered. Position 792 is a phosphothreonine (threonine 792). Serine 797 and serine 815 each carry phosphoserine. The segment covering 798 to 822 (PEDREPQQKRAHTDEPHSPQSKKES) has biased composition (basic and acidic residues).

This sequence belongs to the RNase Z family. Homodimer. Interacts with PTCD1. Requires Zn(2+) as cofactor.

The protein localises to the mitochondrion. The protein resides in the mitochondrion matrix. It is found in the mitochondrion nucleoid. Its subcellular location is the nucleus. The catalysed reaction is Endonucleolytic cleavage of RNA, removing extra 3' nucleotides from tRNA precursor, generating 3' termini of tRNAs. A 3'-hydroxy group is left at the tRNA terminus and a 5'-phosphoryl group is left at the trailer molecule.. Its function is as follows. Zinc phosphodiesterase, which displays mitochondrial tRNA 3'-processing endonuclease activity. Involved in tRNA maturation, by removing a 3'-trailer from precursor tRNA. Associates with mitochondrial DNA complexes at the nucleoids to initiate RNA processing and ribosome assembly. In Mus musculus (Mouse), this protein is Zinc phosphodiesterase ELAC protein 2 (Elac2).